The chain runs to 318 residues: Ribose-phosphate pyrophosphokinase 3 (318 aa).

Position 96–101 (96–101 (RQDKKD)) interacts with ATP. Residues Asp128, His130, Asp139, and Asp143 each contribute to the Mg(2+) site. ATP is bound at residue His130. Positions 212–227 (NDRVAILVDDMADTCV) are binding of phosphoribosylpyrophosphate.

It belongs to the ribose-phosphate pyrophosphokinase family. In terms of assembly, homodimer. The active form is probably a hexamer composed of 3 homodimers. Mg(2+) serves as cofactor. As to expression, testis.

It catalyses the reaction D-ribose 5-phosphate + ATP = 5-phospho-alpha-D-ribose 1-diphosphate + AMP + H(+). It participates in metabolic intermediate biosynthesis; 5-phospho-alpha-D-ribose 1-diphosphate biosynthesis; 5-phospho-alpha-D-ribose 1-diphosphate from D-ribose 5-phosphate (route I): step 1/1. Its activity is regulated as follows. Activated by magnesium and inorganic phosphate. Its function is as follows. Catalyzes the synthesis of phosphoribosylpyrophosphate (PRPP) that is essential for nucleotide synthesis. This chain is Ribose-phosphate pyrophosphokinase 3 (PRPS1L1), found in Homo sapiens (Human).